The sequence spans 228 residues: Derlin-3 (228 aa).

Topologically, residues 1–22 (MAGQRLAAGFLQVPAVTRAYTA) are cytoplasmic. The helical transmembrane segment at 23–43 (ACVLTTAAVQLELLSPFQLYF) threads the bilayer. The Lumenal segment spans residues 44-57 (NPHLVFRKFQVWRL). Residues 58 to 78 (ITTFLFFGPLGFGFFFNMLFV) traverse the membrane as a helical segment. At 79–98 (FRYCRMLEEGSFRGRKADFV) the chain is on the cytoplasmic side. The chain crosses the membrane as a helical span at residues 99 to 119 (FMFLFGGVLMTLLGFLGSLFF). Residues 120 to 168 (LGQALMAMLVYVWSRRSPHVRVNFFGLLNFQAPFLPWALMGFSLLLGNS) lie on the Lumenal side of the membrane. The chain crosses the membrane as a helical span at residues 169-189 (VVTDLLGILVGHIYYFLEDVF). Residues 190–228 (PNQPGGKRLLLTPSVLKLLLDDPQEDPDYLPLPEEQPEL) are Cytoplasmic-facing.

This sequence belongs to the derlin family. In terms of assembly, forms homo- and heterooligomers with DERL2 and, to a lesser extent, with DERL1. Interacts with VCP and EDEM1. Interacts with SELENOK and SELENOS. Interacts with the signal recognition particle/SRP and the SRP receptor; in the process of endoplasmic reticulum stress-induced pre-emptive quality control. In terms of tissue distribution, highly expressed in spleen, lung, liver, spleen and testis. Expressed at intermediate level in kidney. Weakly or not expressed in brain, heart and skeletal muscle.

The protein localises to the endoplasmic reticulum membrane. Its function is as follows. Functional component of endoplasmic reticulum-associated degradation (ERAD) for misfolded lumenal glycoproteins, but not that of misfolded nonglycoproteins. May act by forming a channel that allows the retrotranslocation of misfolded glycoproteins into the cytosol where they are ubiquitinated and degraded by the proteasome. May mediate the interaction between VCP and the misfolded glycoproteins. May be involved in endoplasmic reticulum stress-induced pre-emptive quality control, a mechanism that selectively attenuates the translocation of newly synthesized proteins into the endoplasmic reticulum and reroutes them to the cytosol for proteasomal degradation. This chain is Derlin-3, found in Mus musculus (Mouse).